Consider the following 463-residue polypeptide: Trigger factor (463 aa).

The region spanning 162 to 243 is the PPIase FKBP-type domain; that stretch reads GDHVSIDLSA…VHSVKLKELP (82 aa). Residues 427-444 show a composition bias toward polar residues; that stretch reads SGNTIEPPTPVHTETITV. The segment at 427 to 463 is disordered; it reads SGNTIEPPTPVHTETITVASGDEETEESAAEQGETEK.

Belongs to the FKBP-type PPIase family. Tig subfamily.

The protein resides in the cytoplasm. It carries out the reaction [protein]-peptidylproline (omega=180) = [protein]-peptidylproline (omega=0). Its function is as follows. Involved in protein export. Acts as a chaperone by maintaining the newly synthesized protein in an open conformation. Functions as a peptidyl-prolyl cis-trans isomerase. The sequence is that of Trigger factor from Thermobifida fusca (strain YX).